A 26-amino-acid chain; its full sequence is ALWKNMLSGIGKLAGQAALGAVKTLV.

Val-26 is modified (valine amide).

In terms of tissue distribution, expressed by the skin glands.

It is found in the secreted. Functionally, has antimicrobial activity. The protein is Dermaseptin-J3 of Phasmahyla jandaia (Jandaia leaf frog).